The chain runs to 183 residues: Adenylate kinase (183 aa).

G12–T17 provides a ligand contact to ATP. Residues S32 to V61 form an NMP region. AMP contacts are provided by residues T33, R38, E59–V61, G86–R89, and Q93. The interval S127 to D133 is LID. R128 contributes to the ATP binding site. Residues R130 and R141 each coordinate AMP. Residue G169 participates in ATP binding.

Belongs to the adenylate kinase family. In terms of assembly, monomer.

The protein localises to the cytoplasm. It catalyses the reaction AMP + ATP = 2 ADP. Its pathway is purine metabolism; AMP biosynthesis via salvage pathway; AMP from ADP: step 1/1. In terms of biological role, catalyzes the reversible transfer of the terminal phosphate group between ATP and AMP. Plays an important role in cellular energy homeostasis and in adenine nucleotide metabolism. The sequence is that of Adenylate kinase from Synechococcus sp. (strain CC9311).